A 433-amino-acid chain; its full sequence is Acetylcholine receptor-like protein cup-4 (433 aa).

The first 24 residues, 1-24, serve as a signal peptide directing secretion; it reads MKIIIFVCFILIFYLPIQKKHVNS. Asparagine 41 and asparagine 68 each carry an N-linked (GlcNAc...) asparagine glycan. Cysteine 178 and cysteine 192 form a disulfide bridge. Residues asparagine 237 and asparagine 249 are each glycosylated (N-linked (GlcNAc...) asparagine). 4 consecutive transmembrane segments (helical) span residues 282–302, 307–327, 337–357, and 413–433; these read EAAV…TFFI, STFL…HDLV, IPFC…TLVL, and PIIG…CLLL.

The protein belongs to the ligand-gated ion channel (TC 1.A.9) family. Acetylcholine receptor (TC 1.A.9.1) subfamily. In terms of tissue distribution, expressed in coelomocytes.

It is found in the cytoplasmic vesicle membrane. In terms of biological role, thought to regulate endocytosis in coelomocytes through modulation of phospholipase C activity. Possible acetylcholine receptor. The chain is Acetylcholine receptor-like protein cup-4 (cup-4) from Caenorhabditis elegans.